The primary structure comprises 282 residues: NADPH-dependent 7-cyano-7-deazaguanine reductase (282 aa).

Isoleucine 88 to serine 90 is a substrate binding site. Serine 90–lysine 91 contacts NADPH. The active-site Thioimide intermediate is the cysteine 190. Residue aspartate 197 is the Proton donor of the active site. Histidine 229–glutamate 230 is a binding site for substrate. Arginine 258–glycine 259 serves as a coordination point for NADPH.

The protein belongs to the GTP cyclohydrolase I family. QueF type 2 subfamily. In terms of assembly, homodimer.

The protein resides in the cytoplasm. It carries out the reaction 7-aminomethyl-7-carbaguanine + 2 NADP(+) = 7-cyano-7-deazaguanine + 2 NADPH + 3 H(+). It functions in the pathway tRNA modification; tRNA-queuosine biosynthesis. Functionally, catalyzes the NADPH-dependent reduction of 7-cyano-7-deazaguanine (preQ0) to 7-aminomethyl-7-deazaguanine (preQ1). This chain is NADPH-dependent 7-cyano-7-deazaguanine reductase, found in Citrobacter koseri (strain ATCC BAA-895 / CDC 4225-83 / SGSC4696).